The following is a 67-amino-acid chain: Large ribosomal subunit protein bL35 (67 aa).

The protein belongs to the bacterial ribosomal protein bL35 family.

The sequence is that of Large ribosomal subunit protein bL35 from Paramagnetospirillum magneticum (strain ATCC 700264 / AMB-1) (Magnetospirillum magneticum).